We begin with the raw amino-acid sequence, 359 residues long: MITVNVDLGDRAYPIHIGAGLIGRAELFAPHIKGSSVTIVTNTTVDPLYGDALRAALAPLGKRVSTVVLPDGEAYKNWETLNLIFDGLLTDRADRKTTLVALGGGVVGDMTGFAAACYMRGVPFIQVPTTLLSQVDSSVGGKTGINHPLGKNMIGAFYQPQAVIADIGALTTLPDRELAAGVAEIIKTGAIADAEFFDWIEANVDALNRRDPAALAHAVKRSCEIKASVVAADEREGGLRAILNFGHTFGHAIEAGLGYGEWLHGEAVGCGMVMAGDLSVRLGLLDEASRQRLDAVIAAAHLPTRGPALGDARYLDLMRVDKKAEAGAIKFILLKRFGDTLITQAPDEAVFATLAQTTH.

Residues 71 to 76, 105 to 109, 129 to 130, lysine 142, and lysine 151 each bind NAD(+); these read DGEAYK, GVVGD, and TT. Zn(2+)-binding residues include glutamate 184, histidine 247, and histidine 264.

The protein belongs to the sugar phosphate cyclases superfamily. Dehydroquinate synthase family. Requires Co(2+) as cofactor. It depends on Zn(2+) as a cofactor. The cofactor is NAD(+).

It localises to the cytoplasm. It carries out the reaction 7-phospho-2-dehydro-3-deoxy-D-arabino-heptonate = 3-dehydroquinate + phosphate. Its pathway is metabolic intermediate biosynthesis; chorismate biosynthesis; chorismate from D-erythrose 4-phosphate and phosphoenolpyruvate: step 2/7. Functionally, catalyzes the conversion of 3-deoxy-D-arabino-heptulosonate 7-phosphate (DAHP) to dehydroquinate (DHQ). The chain is 3-dehydroquinate synthase from Burkholderia lata (strain ATCC 17760 / DSM 23089 / LMG 22485 / NCIMB 9086 / R18194 / 383).